A 101-amino-acid chain; its full sequence is NADH-quinone oxidoreductase subunit K (101 aa).

3 helical membrane passes run 2–22, 28–48, and 62–82; these read TLSA…YGAL, VIVL…FVAF, and FALF…AALI.

Belongs to the complex I subunit 4L family. As to quaternary structure, NDH-1 is composed of 14 different subunits. Subunits NuoA, H, J, K, L, M, N constitute the membrane sector of the complex.

It is found in the cell membrane. It carries out the reaction a quinone + NADH + 5 H(+)(in) = a quinol + NAD(+) + 4 H(+)(out). Its function is as follows. NDH-1 shuttles electrons from NADH, via FMN and iron-sulfur (Fe-S) centers, to quinones in the respiratory chain. The immediate electron acceptor for the enzyme in this species is believed to be a menaquinone. Couples the redox reaction to proton translocation (for every two electrons transferred, four hydrogen ions are translocated across the cytoplasmic membrane), and thus conserves the redox energy in a proton gradient. This is NADH-quinone oxidoreductase subunit K from Geobacillus kaustophilus (strain HTA426).